The sequence spans 388 residues: Omega-hydroxy-beta-dihydromenaquinone-9 sulfotransferase Stf3 (388 aa).

Belongs to the Stf3 family.

It carries out the reaction omega-hydroxy-beta-dihydromenaquinone-9 + 3'-phosphoadenylyl sulfate = omega-sulfo-beta-dihydromenaquinone-9 + adenosine 3',5'-bisphosphate + H(+). Functionally, involved in the biosynthesis of sulfomenaquinone (SMK, initially named S881 on the basis of its mass), which is localized in the outer envelope of M.bovis and negatively regulates its virulence. Catalyzes the transfer of a sulfonate group from 3'-phosphoadenosine-5'-phosphosulfate (PAPS) to omega-hydroxy-beta-dihydromenaquinone-9, generating omega-sulfo-beta-dihydromenaquinone-9 (sulfomenaquinone). This Mycobacterium bovis (strain ATCC BAA-935 / AF2122/97) protein is Omega-hydroxy-beta-dihydromenaquinone-9 sulfotransferase Stf3.